Consider the following 339-residue polypeptide: Ketol-acid reductoisomerase (NADP(+)) (339 aa).

Residues 1-182 (MRVYYDRDAD…GGGRSGIIET (182 aa)) enclose the KARI N-terminal Rossmann domain. Residues 24–27 (YGSQ), Arg48, Ser51, Thr53, and 83–86 (DEHQ) contribute to the NADP(+) site. The active site involves His108. Residue Gly134 participates in NADP(+) binding. Residues 183 to 328 (NFREECETDL…ARLRGMMPWI (146 aa)) form the KARI C-terminal knotted domain. Mg(2+) contacts are provided by Asp191, Glu195, Glu227, and Glu231. Ser252 contacts substrate.

Belongs to the ketol-acid reductoisomerase family. Mg(2+) serves as cofactor.

It carries out the reaction (2R)-2,3-dihydroxy-3-methylbutanoate + NADP(+) = (2S)-2-acetolactate + NADPH + H(+). It catalyses the reaction (2R,3R)-2,3-dihydroxy-3-methylpentanoate + NADP(+) = (S)-2-ethyl-2-hydroxy-3-oxobutanoate + NADPH + H(+). It functions in the pathway amino-acid biosynthesis; L-isoleucine biosynthesis; L-isoleucine from 2-oxobutanoate: step 2/4. The protein operates within amino-acid biosynthesis; L-valine biosynthesis; L-valine from pyruvate: step 2/4. Functionally, involved in the biosynthesis of branched-chain amino acids (BCAA). Catalyzes an alkyl-migration followed by a ketol-acid reduction of (S)-2-acetolactate (S2AL) to yield (R)-2,3-dihydroxy-isovalerate. In the isomerase reaction, S2AL is rearranged via a Mg-dependent methyl migration to produce 3-hydroxy-3-methyl-2-ketobutyrate (HMKB). In the reductase reaction, this 2-ketoacid undergoes a metal-dependent reduction by NADPH to yield (R)-2,3-dihydroxy-isovalerate. This Caulobacter sp. (strain K31) protein is Ketol-acid reductoisomerase (NADP(+)).